The chain runs to 846 residues: Protein kintoun (846 aa).

4 disordered regions span residues 1 to 21, 372 to 416, 581 to 657, and 743 to 846; these read MSTA…ERAD, YLSR…PALT, HTSI…DSTI, and HDSS…DDEI. At S378 the chain carries Phosphoserine. A compositionally biased stretch (acidic residues) spans 389-403; that stretch reads PVEDDADGDMPETPE. 2 stretches are compositionally biased toward basic residues: residues 596–612 and 750–766; these read LHKK…KKQR and QRKK…RAQQ. Residue S770 is modified to Phosphoserine. Over residues 821–832 the composition is skewed to basic and acidic residues; the sequence is TRQDHADADAKN.

Belongs to the PIH1 family. Kintoun subfamily. Interacts with Pp1alpha-96A, Pp1-87B, Pp1-13C and flw.

Its subcellular location is the cytoplasm. Functionally, required for cytoplasmic pre-assembly of axonemal dyneins, thereby playing a central role in motility in cilia and flagella. Involved in pre-assembly of dynein arm complexes in the cytoplasm before intraflagellar transport loads them for the ciliary compartment. The polypeptide is Protein kintoun (Drosophila persimilis (Fruit fly)).